The primary structure comprises 290 residues: Protein MGF 110-9L (290 aa).

The next 3 membrane-spanning stretches (helical) occupy residues 1–19 (MKVI…VIQS), 128–148 (VENI…IGYI), and 163–183 (LLIF…IIMN). 2 N-linked (GlcNAc...) asparagine; by host glycosylation sites follow: N242 and N267.

Belongs to the asfivirus MGF 110 family.

Its subcellular location is the host membrane. In terms of biological role, plays a role in virus cell tropism, and may be required for efficient virus replication in macrophages. The polypeptide is Protein MGF 110-9L (Ornithodoros (relapsing fever ticks)).